Here is an 861-residue protein sequence, read N- to C-terminus: Importin subunit beta-1 (861 aa).

N-acetylserine is present on S2. HEAT repeat units follow at residues 3 to 35 (TAEF…LSND), 37 to 66 (FLQF…LTLK), 90 to 129 (PEAK…ELPH), 134 to 164 (ELMK…YMCE), 177 to 208 (SNNI…LADS), 219 to 255 (EGER…MSLY), 260 to 306 (KPYM…ELAQ), 317 to 362 (FALS…AQNC), 367 to 395 (LEPV…AFGS), 402 to 442 (KVQR…ADSV), 452 to 484 (LPGV…VEQL), 496 to 530 (YPAL…MVEY), 536 to 586 (AETS…VIRK), 592 to 629 (EPVA…AASL), 634 to 669 (EKYL…ISNS), 675 to 713 (RRYS…ASNI), 718 to 764 (IPYL…IVAG), 773 to 812 (FPYV…IAAM), and 819 to 859 (KQFY…KRQL). One can recognise an Importin N-terminal domain in the interval 25–106 (SETQLKKLSN…KTNALTALVS (82 aa)). The residue at position 836 (S836) is a Phosphoserine.

It belongs to the importin beta family. Importin beta-1 subfamily. In terms of assembly, forms a complex with the importin alpha subunit (SRP1/KAP60). Interacts with Ran (GSP1); interacts specifically with the GTP-bound form of Ran (GTP-Ran), protecting it from GTP hydrolysis and nucleotide exchange. Interacts with nucleoporin NUP1.

It localises to the cytoplasm. The protein localises to the nucleus. The protein resides in the nuclear pore complex. Importin beta subunit that functions in nuclear protein import through association with the importin alpha subunit, which binds to the classical nuclear localization signal (cNLS) in cargo substrates. Docking of the importin/substrate complex to the nuclear pore complex (NPC) is mediated by importin beta through binding to nucleoporin FxFG repeats and the complex is subsequently translocated through the pore by an energy requiring, Ran-dependent mechanism. At the nucleoplasmic side of the NPC, GTP-Ran binds to importin beta and the three components separate, leading to release of the cargo. Importin alpha and beta are re-exported from the nucleus to the cytoplasm where GTP hydrolysis releases Ran from importin beta. The directionality of nuclear import is thought to be conferred by an asymmetric distribution of the GTP- and GDP-bound forms of Ran between the cytoplasm and nucleus. Mediates the nuclear import of histones H2A and H2B. Mediates the nuclear import of transcription factor GCN4. In Saccharomyces cerevisiae (strain ATCC 204508 / S288c) (Baker's yeast), this protein is Importin subunit beta-1.